A 346-amino-acid polypeptide reads, in one-letter code: SUMO-activating enzyme subunit 1 (346 aa).

Met1 carries the N-acetylmethionine modification. At Val2 the chain carries N-acetylvaline; in SUMO-activating enzyme subunit 1, N-terminally processed. Residue Ser12 is modified to Phosphoserine. Lys198 carries the post-translational modification N6-acetyllysine.

This sequence belongs to the ubiquitin-activating E1 family. In terms of assembly, heterodimer of SAE1 and UBA2/SAE2. The heterodimer corresponds to the two domains that are encoded on a single polypeptide chain in ubiquitin-activating enzyme E1. Interacts with UBE2I. As to expression, expression level increases during S phase and drops in G2 phase (at protein level).

The protein localises to the nucleus. It functions in the pathway protein modification; protein sumoylation. Functionally, the heterodimer acts as an E1 ligase for SUMO1, SUMO2, SUMO3, and probably SUMO4. It mediates ATP-dependent activation of SUMO proteins followed by formation of a thioester bond between a SUMO protein and a conserved active site cysteine residue on UBA2/SAE2. The sequence is that of SUMO-activating enzyme subunit 1 (SAE1) from Homo sapiens (Human).